A 318-amino-acid polypeptide reads, in one-letter code: MPNIKIFSGSSHQDLSQKIADRLGLELGKVVTKKFSNQETCVEIGESVRGEDVYIVQSGCGEINDNLMELLIMINACKIASASRVTAVIPCFPYARQDKKDKSRAPISAKLVANMLSVAGADHIITMDLHASQIQGFFDIPVDNLYAEPAVLKWIRENISEWRNCTIVSPDAGGAKRVTSIADRLNVDFALIHKERKKANEVDRMVLVGDVKDRVAILVDDMADTCGTICHAADKLLSAGATRVYAILTHGIFSGPAISRINNACFEAVVVTNTIPQEDKMKHCSKIQVIDISMILAEAIRRTHNGESVSYLFSHVPL.

Residue Arg96 to Asp101 coordinates ATP. Residues Asp128, His130, Asp139, and Asp143 each contribute to the Mg(2+) site. Residue His130 coordinates ATP. Residues Lys212 to Gly227 form a binding of phosphoribosylpyrophosphate region.

Belongs to the ribose-phosphate pyrophosphokinase family. In terms of assembly, homodimer. The active form is probably a hexamer composed of 3 homodimers. Requires Mg(2+) as cofactor.

The enzyme catalyses D-ribose 5-phosphate + ATP = 5-phospho-alpha-D-ribose 1-diphosphate + AMP + H(+). It functions in the pathway metabolic intermediate biosynthesis; 5-phospho-alpha-D-ribose 1-diphosphate biosynthesis; 5-phospho-alpha-D-ribose 1-diphosphate from D-ribose 5-phosphate (route I): step 1/1. Activated by magnesium and inorganic phosphate. Catalyzes the synthesis of phosphoribosylpyrophosphate (PRPP) that is essential for nucleotide synthesis. This Bos taurus (Bovine) protein is Ribose-phosphate pyrophosphokinase 1 (PRPS1).